The following is a 958-amino-acid chain: Dermatan-sulfate epimerase (958 aa).

A signal peptide spans 1-22; sequence MRTHTRGAPSVFFIYLLCFVSA. Topologically, residues 23–902 are lumenal; the sequence is YITDENPEVM…APSLSASYTR (880 aa). Residue N183 is glycosylated (N-linked (GlcNAc...) (complex) asparagine). H205 serves as the catalytic Proton donor. Residue Y261 is part of the active site. N-linked (GlcNAc...) (high mannose) asparagine glycosylation is present at N336. N411 carries N-linked (GlcNAc...) (complex) asparagine glycosylation. Mn(2+) is bound by residues H452 and E470. Y473 is a catalytic residue. N481 is a Mn(2+) binding site. N-linked (GlcNAc...) (complex) asparagine glycosylation is present at N642. N-linked (GlcNAc...) (paucimannose) asparagine glycosylation occurs at N648. A helical membrane pass occupies residues 903-923; sequence LFLILNIAIFFVMLAMQLTYF. Residues 924-933 lie on the Cytoplasmic side of the membrane; it reads QRAQSLHGQR. A helical membrane pass occupies residues 934–954; it reads CLYAVLLIDSCILLWLYSSCS. Residues 955 to 958 are Lumenal-facing; that stretch reads QSQC.

This sequence belongs to the dermatan-sulfate isomerase family. Requires Mn(2+) as cofactor. In terms of processing, N-glycosylated. Glycosylation is important for enzymatic activity. As to expression, ubiquitously expressed with higher expression in kidney and ovary and lower expression in brain, colon and thymus. Also expressed in renal cell carcinomas, brain tumors, and in a part of melanomas and adenocarcinomas from organs other than the breast. Expressed in squamous cell carcinomas (SCC), glioma, and some adenocarcinoma cell lines, but not in breast cancer cell lines or any normal tissues (at protein level).

It localises to the endoplasmic reticulum membrane. Its subcellular location is the golgi apparatus membrane. The protein resides in the cytoplasmic vesicle membrane. It is found in the microsome membrane. It carries out the reaction chondroitin 4'-sulfate = dermatan 4'-sulfate. The protein operates within glycan metabolism; chondroitin sulfate biosynthesis. It participates in glycan metabolism; heparan sulfate biosynthesis. In terms of biological role, converts D-glucuronic acid to L-iduronic acid (IdoUA) residues. Plays an important role in the biosynthesis of the glycosaminoglycan/mucopolysaccharide dermatan sulfate. This chain is Dermatan-sulfate epimerase (DSE), found in Homo sapiens (Human).